A 311-amino-acid polypeptide reads, in one-letter code: Methionyl-tRNA formyltransferase (311 aa).

110-113 (SLLP) provides a ligand contact to (6S)-5,6,7,8-tetrahydrofolate.

It belongs to the Fmt family.

It catalyses the reaction L-methionyl-tRNA(fMet) + (6R)-10-formyltetrahydrofolate = N-formyl-L-methionyl-tRNA(fMet) + (6S)-5,6,7,8-tetrahydrofolate + H(+). Functionally, attaches a formyl group to the free amino group of methionyl-tRNA(fMet). The formyl group appears to play a dual role in the initiator identity of N-formylmethionyl-tRNA by promoting its recognition by IF2 and preventing the misappropriation of this tRNA by the elongation apparatus. The sequence is that of Methionyl-tRNA formyltransferase from Streptococcus pneumoniae serotype 2 (strain D39 / NCTC 7466).